We begin with the raw amino-acid sequence, 768 residues long: Translation factor GUF1 homolog, mitochondrial (768 aa).

A mitochondrion-targeting transit peptide spans 1 to 29; the sequence is MRLWNRFSRLGNLLCACAACGCSFTPWRC. A tr-type G domain is found at 110–293; sequence SNIRNVAVVA…AIIERVPSPS (184 aa). GTP contacts are provided by residues 119–126, 184–188, and 238–241; these read AHVDHGKT, DTPGH, and TKMD.

The protein belongs to the TRAFAC class translation factor GTPase superfamily. Classic translation factor GTPase family. LepA subfamily.

The protein resides in the mitochondrion inner membrane. The enzyme catalyses GTP + H2O = GDP + phosphate + H(+). Functionally, promotes mitochondrial protein synthesis. May act as a fidelity factor of the translation reaction, by catalyzing a one-codon backward translocation of tRNAs on improperly translocated ribosomes. Binds to mitochondrial ribosomes in a GTP-dependent manner. This is Translation factor GUF1 homolog, mitochondrial from Trypanosoma brucei brucei (strain 927/4 GUTat10.1).